A 451-amino-acid polypeptide reads, in one-letter code: Glycine--tRNA ligase (451 aa).

R101 and E151 together coordinate substrate. ATP-binding positions include 183–185 (RNE), 193–198 (FRTCEF), 267–268 (EL), and 312–315 (GLTR). Substrate is bound at residue 198–202 (FEQME). Residue 308 to 312 (ETSAG) participates in substrate binding.

This sequence belongs to the class-II aminoacyl-tRNA synthetase family. In terms of assembly, homodimer.

The protein resides in the cytoplasm. The enzyme catalyses tRNA(Gly) + glycine + ATP = glycyl-tRNA(Gly) + AMP + diphosphate. Functionally, catalyzes the attachment of glycine to tRNA(Gly). The polypeptide is Glycine--tRNA ligase (Treponema denticola (strain ATCC 35405 / DSM 14222 / CIP 103919 / JCM 8153 / KCTC 15104)).